Here is a 734-residue protein sequence, read N- to C-terminus: MASRFPKFSQGLAQDPTTRRIWFGIATAHDFESHDDITEERLYQKIFASHFGQLAVIFLWTSGNLFHVAWQGNFEAWGKDPLHVRPIAHAIWDPHFGQPAVEAFTRGGASGPVNIAYSGVYQWWYTIGMRTNQDLYTGALFLLAVSAVALVAGWLHLQPKWKPSVSWFKNAESRLNHHLSGLFGVSSLAWTGHLVHVAIPESRGQHIGWDNFLTTPPHPQGLTPFFSGQWSVYAQDADSSGHLFGTTEGAGTAILTFLGGFHPQTQSLWLTDIAHHHLAIAVLFIVAGHMYRTNFGIGHSIREILDAHVPPAGRLGRGHQGLYDTINNSLHFQLGLALASLGVITSLVAQHMYSLPPYAFLAQDFTTQAALYTHHQYIAGFIMTGAFAHGAIFFIRDYNPEQNKSNVLARMLEHKEAIISHLSWASLFLGFHTLGLYVHNDVMLAFGTPEKQILIEPVFAQWIQSAHGKSLYGFDVLLSNAASPALSAGQSIWLPGWLDAINSGSNSLFLTIGPGDFLVHHAIALGLHTTTLILVKGALDARGSKLMPDKKEFGFSFPCDGPGRGGTCDISAWDAFYLAVFWMLNTIGWVTFYWHWKHLTLWQGNAAQFAESSTYLMGWLRDYLWLNSSQLINGYNPFGMNSLSVWAWMFLFGHLVWATGFMFLISWRGYWQELIETLAWAHERTPLANLVRWKDKPVALSIVQARLVGLAHFSVGYIFTYAAFLIASTSGKFG.

8 consecutive transmembrane segments (helical) span residues 46–69, 135–158, 175–199, 273–291, 330–353, 369–395, 417–439, and 517–535; these read IFAS…FHVA, LYTG…LHLQ, LNHH…HVAI, IAHH…GHMY, LHFQ…QHMY, AALY…IFFI, AIIS…LYVH, and FLVH…LILV. Residues Cys-559 and Cys-568 each contribute to the [4Fe-4S] cluster site. 2 consecutive transmembrane segments (helical) span residues 575 to 596 and 643 to 665; these read AFYL…YWHW and LSVW…MFLI. 3 residues coordinate chlorophyll a: His-654, Met-662, and Tyr-670. Residue Trp-671 participates in phylloquinone binding. A helical membrane pass occupies residues 707–727; it reads LVGLAHFSVGYIFTYAAFLIA.

This sequence belongs to the PsaA/PsaB family. The PsaA/B heterodimer binds the P700 chlorophyll special pair and subsequent electron acceptors. PSI consists of a core antenna complex that captures photons, and an electron transfer chain that converts photonic excitation into a charge separation. The eukaryotic PSI reaction center is composed of at least 11 subunits. It depends on P700 is a chlorophyll a/chlorophyll a' dimer, A0 is one or more chlorophyll a, A1 is one or both phylloquinones and FX is a shared 4Fe-4S iron-sulfur center. as a cofactor.

The protein resides in the plastid. Its subcellular location is the chloroplast thylakoid membrane. The enzyme catalyses reduced [plastocyanin] + hnu + oxidized [2Fe-2S]-[ferredoxin] = oxidized [plastocyanin] + reduced [2Fe-2S]-[ferredoxin]. Functionally, psaA and PsaB bind P700, the primary electron donor of photosystem I (PSI), as well as the electron acceptors A0, A1 and FX. PSI is a plastocyanin-ferredoxin oxidoreductase, converting photonic excitation into a charge separation, which transfers an electron from the donor P700 chlorophyll pair to the spectroscopically characterized acceptors A0, A1, FX, FA and FB in turn. Oxidized P700 is reduced on the lumenal side of the thylakoid membrane by plastocyanin. The chain is Photosystem I P700 chlorophyll a apoprotein A2 from Zygnema circumcarinatum (Green alga).